Consider the following 314-residue polypeptide: Short chain dehydrogenase atnD (314 aa).

Residues leucine 41, lysine 66, aspartate 90, and asparagine 116 each coordinate NADP(+). Catalysis depends on proton donor residues serine 171 and tyrosine 204. Residues tyrosine 204 and lysine 208 each contribute to the NADP(+) site. Lysine 208 (lowers pKa of active site Tyr) is an active-site residue.

It belongs to the short-chain dehydrogenases/reductases (SDR) family.

The protein operates within secondary metabolite biosynthesis. Functionally, short chain dehydrogenase; part of the gene cluster that mediates the biosynthesis of aspercryptins, linear lipopeptides built from six amino acids including 2 highly unusual and nonproteogenic amino acids, 2-amino-octanoic acid (2aoa) and 2-amino-dodecanol (2adol). The core structure of aspercryptins is as follows: Ser/Ala-Thr-Ile/Val-2aoa-Asn-2adol. The first step of aspercryptin biosynthesis is the generation of the fatty acid precursors, octanoic and dodecanoic acids, by the FAS subunits atnF and atnM. The fatty acid precursors are likely transformed into the corresponding alpha-amino fatty acids in three steps. First, they are hydroxylated by the cytochrome P450 monooxygenase atnE, then oxidized to the corresponding alpha-keto acids by the NAD(P)-dependent oxidoreductase atnD, and finally converted to the alpha-amino fatty acids by the PLP-dependent aminotransferases atnH or atnJ. the alpha-amino fatty acids, 2-amino-octanoic and 2-amino-dodecanoic acids, are recognized, activated, and covalently tethered to the NRPS atnA by its fourth and sixth adenylation domains. The second module of atnA is the Thr module and contains an epimerase (E) domain responsible for the epimerization of Thr to D-allo-Thr. Additionally, despite atnA having only one epimerase domain, the first amino acid of aspercryptin A1 is D-Ser, suggesting that serine is either loaded directly as D-Ser on the first module or that the epimerase domain in the threonine module epimerizes both L-Ser and L-Thr. After condensation of the hexapeptide of aspercryptin, the C-terminal reductase (TE) domain might be involved in the reductive release and production of the aldehyde hexapeptide. Further reduction would generate aspercryptins. The variety of aspercryptins produced reflects the flexibility of the atnA NRPS, allowing incorporation of alanine instead of serine, valine for isoleucine, and a C10 fatty amino alcohol instead of the C12 version. AtnB seems to be involved in the selectivity for Ile versus Val by the third module. Moreover, type B, C and D aspercryptins have an additional N-terminal cichorine, acetyl and propionyl group respectively. This chain is Short chain dehydrogenase atnD, found in Emericella nidulans (strain FGSC A4 / ATCC 38163 / CBS 112.46 / NRRL 194 / M139) (Aspergillus nidulans).